The chain runs to 265 residues: Glutamate racemase (265 aa).

Substrate contacts are provided by residues 10-11 (DS) and 42-43 (YG). Cys73 (proton donor/acceptor) is an active-site residue. 74–75 (NT) serves as a coordination point for substrate. Cys184 acts as the Proton donor/acceptor in catalysis. 185-186 (TH) serves as a coordination point for substrate.

Belongs to the aspartate/glutamate racemases family.

It catalyses the reaction L-glutamate = D-glutamate. It functions in the pathway cell wall biogenesis; peptidoglycan biosynthesis. In terms of biological role, provides the (R)-glutamate required for cell wall biosynthesis. In Pediococcus pentosaceus (strain ATCC 25745 / CCUG 21536 / LMG 10740 / 183-1w), this protein is Glutamate racemase.